The sequence spans 428 residues: PGL/p-HBAD biosynthesis glycosyltransferase MRA_2985 (428 aa).

The disordered stretch occupies residues 1 to 23; that stretch reads MEETSVAGDPGPDAGTSTAPNAA.

It belongs to the UDP-glycosyltransferase family.

Involved in glycosylation steps downstream of mono-O-methyl-glycosyl-p-hydroxybenzoic acid derivative (p-HBAD I) and 2-O-methyl-rhamnosyl-phenolphthiocerol dimycocerosate (mycoside B) during the p-hydroxybenzoic acid derivatives (p-HBAD) and glycosylated phenolphthiocerol dimycocerosates (PGL) biosynthesis. The chain is PGL/p-HBAD biosynthesis glycosyltransferase MRA_2985 from Mycobacterium tuberculosis (strain ATCC 25177 / H37Ra).